Here is a 498-residue protein sequence, read N- to C-terminus: Glycerol kinase (498 aa).

Thr-12 is a binding site for ADP. Residues Thr-12, Thr-13, and Ser-14 each coordinate ATP. Thr-12 lines the sn-glycerol 3-phosphate pocket. ADP is bound at residue Arg-16. Residues Arg-82, Glu-83, Tyr-134, and Asp-243 each contribute to the sn-glycerol 3-phosphate site. Glycerol is bound by residues Arg-82, Glu-83, Tyr-134, Asp-243, and Gln-244. ADP is bound by residues Thr-265 and Gly-308. ATP is bound by residues Thr-265, Gly-308, Gln-312, and Gly-411. Gly-411 provides a ligand contact to ADP.

Belongs to the FGGY kinase family.

The enzyme catalyses glycerol + ATP = sn-glycerol 3-phosphate + ADP + H(+). The protein operates within polyol metabolism; glycerol degradation via glycerol kinase pathway; sn-glycerol 3-phosphate from glycerol: step 1/1. Inhibited by fructose 1,6-bisphosphate (FBP). Key enzyme in the regulation of glycerol uptake and metabolism. Catalyzes the phosphorylation of glycerol to yield sn-glycerol 3-phosphate. This Brucella suis biovar 1 (strain 1330) protein is Glycerol kinase.